The chain runs to 494 residues: Tripartite motif-containing protein 5 (494 aa).

Alanine 2 carries the N-acetylalanine modification. Residues 15–59 (CPICLELLTQPLSLDCGHSFCQACLTANHKTSMPDEGERSCPVCR) form an RING-type zinc finger. Serine 86 carries the phosphoserine modification. Residues 91 to 133 (QKVDHCARHGEKLLLFCQEDRKVICWLCERSQEHRGHHTFLTE) form a B box-type zinc finger. Positions 96, 99, 118, and 124 each coordinate Zn(2+). Residues 132–241 (TEEVAQEYQV…LISDLEHRLQ (110 aa)) are a coiled coil. Positions 186 to 199 (FEQLRHILDWVESN) are required for interaction with GABARAP and for autophagy. In terms of domain architecture, B30.2/SPRY spans 282–494 (LKVMLEVLRE…VPMTLCSPSS (213 aa)).

This sequence belongs to the TRIM/RBCC family. Can form homodimers and homotrimers. In addition to lower-order dimerization, also exhibits a higher-order multimerization and both low- and high-order multimerizations are essential for its restriction activity. Interacts with BTBD1 and BTBD2. Interacts with PSMC4, PSMC5, PSMD7 and HSPA8/HSC70. Interacts (via B30.2/SPRY domain) with HSPA1A/B. Interacts with PSMC2, MAP3K7/TAK1, TAB2 and TAB3. Interacts with SQSTM1. Interacts with TRIM6 and TRIM34. Interacts with ULK1 (phosphorylated form), GABARAP, GABARAPL1, GABARAPL2, MAP1LC3A, MAP1LC3C and BECN1. Post-translationally, degraded in a proteasome-independent fashion in the absence of viral infection but in a proteasome-dependent fashion following exposure to restriction sensitive virus. Autoubiquitinated in a RING finger- and UBE2D2-dependent manner. Monoubiquitinated by TRIM21. Deubiquitinated by Yersinia YopJ. Ubiquitination may not lead to proteasomal degradation.

The protein resides in the cytoplasm. The protein localises to the nucleus. The enzyme catalyses S-ubiquitinyl-[E2 ubiquitin-conjugating enzyme]-L-cysteine + [acceptor protein]-L-lysine = [E2 ubiquitin-conjugating enzyme]-L-cysteine + N(6)-ubiquitinyl-[acceptor protein]-L-lysine.. Its pathway is protein modification; protein ubiquitination. Its function is as follows. Capsid-specific restriction factor that prevents infection from non-host-adapted retroviruses. Blocks viral replication early in the life cycle, after viral entry but before reverse transcription. In addition to acting as a capsid-specific restriction factor, also acts as a pattern recognition receptor that activates innate immune signaling in response to the retroviral capsid lattice. Binding to the viral capsid triggers its E3 ubiquitin ligase activity, and in concert with the heterodimeric ubiquitin conjugating enzyme complex UBE2V1-UBE2N (also known as UBC13-UEV1A complex) generates 'Lys-63'-linked polyubiquitin chains, which in turn are catalysts in the autophosphorylation of the MAP3K7/TAK1 complex (includes TAK1, TAB2, and TAB3). Activation of the MAP3K7/TAK1 complex by autophosphorylation results in the induction and expression of NF-kappa-B and MAPK-responsive inflammatory genes, thereby leading to an innate immune response in the infected cell. Plays a role in regulating autophagy through activation of autophagy regulator BECN1 by causing its dissociation from its inhibitors BCL2 and TAB2. The sequence is that of Tripartite motif-containing protein 5 (TRIM5) from Symphalangus syndactylus (Siamang).